A 314-amino-acid chain; its full sequence is Probable cell division protein WhiA (314 aa).

Positions 274–308 (SLKELGEMVSTGPISKSGVNHRLRKLNDLADKIRN) form a DNA-binding region, H-T-H motif.

Belongs to the WhiA family.

Involved in cell division and chromosome segregation. The sequence is that of Probable cell division protein WhiA from Staphylococcus aureus (strain USA300).